The following is a 252-amino-acid chain: 3-dehydroquinate dehydratase (252 aa).

3-dehydroquinate contacts are provided by residues 46 to 48 and R82; that span reads EWR. Residue H143 is the Proton donor/acceptor of the active site. Residue K170 is the Schiff-base intermediate with substrate of the active site. Residues R212, S231, and Q235 each coordinate 3-dehydroquinate.

Belongs to the type-I 3-dehydroquinase family. As to quaternary structure, homodimer.

It catalyses the reaction 3-dehydroquinate = 3-dehydroshikimate + H2O. Its pathway is metabolic intermediate biosynthesis; chorismate biosynthesis; chorismate from D-erythrose 4-phosphate and phosphoenolpyruvate: step 3/7. Functionally, involved in the third step of the chorismate pathway, which leads to the biosynthesis of aromatic amino acids. Catalyzes the cis-dehydration of 3-dehydroquinate (DHQ) and introduces the first double bond of the aromatic ring to yield 3-dehydroshikimate. The sequence is that of 3-dehydroquinate dehydratase from Listeria innocua serovar 6a (strain ATCC BAA-680 / CLIP 11262).